The sequence spans 305 residues: Ribosomal protein L11 methyltransferase (305 aa).

The S-adenosyl-L-methionine site is built by Thr-155, Gly-176, Asp-198, and Asn-241.

The protein belongs to the methyltransferase superfamily. PrmA family.

The protein resides in the cytoplasm. The catalysed reaction is L-lysyl-[protein] + 3 S-adenosyl-L-methionine = N(6),N(6),N(6)-trimethyl-L-lysyl-[protein] + 3 S-adenosyl-L-homocysteine + 3 H(+). Methylates ribosomal protein L11. This chain is Ribosomal protein L11 methyltransferase, found in Carboxydothermus hydrogenoformans (strain ATCC BAA-161 / DSM 6008 / Z-2901).